The primary structure comprises 386 residues: Latent membrane protein 1 (386 aa).

Over 2 to 23 (DLDLERGPPGPRRPPRGPPLSS) the chain is Cytoplasmic. The helical transmembrane segment at 24–44 (SIGLALLLLLLALLFWLYIIM) threads the bilayer. The Extracellular portion of the chain corresponds to 45-51 (SNWTGGA). The helical transmembrane segment at 52–72 (LLVLYAFALMLVIIILIIFIF) threads the bilayer. At 73–75 (RRD) the chain is on the cytoplasmic side. The chain crosses the membrane as a helical span at residues 76 to 96 (LLCPLGALCLLLLMITLLLIA). Over 97 to 106 (LWNLHGQALY) the chain is Extracellular. Residues 107–127 (LGIVLFIFGCLLVLGLWIYLL) traverse the membrane as a helical segment. At 128-139 (EILWRLGATIWQ) the chain is on the cytoplasmic side. The helical transmembrane segment at 140 to 160 (LLAFFLAFFLDIILLIIALYL) threads the bilayer. Topologically, residues 161–163 (QQN) are extracellular. A helical membrane pass occupies residues 164-184 (WWTLLVDLLWLLLFLAILIWM). Over 185 to 386 (YYHGQRHSDE…HGPVQLSYYD (202 aa)) the chain is Cytoplasmic. The tract at residues 194-232 (EHHHDDSLPHPQQATDDSSNQSDSNSNEGRHLLLVSGAG) is CTAR1. The interval 194 to 386 (EHHHDDSLPH…HGPVQLSYYD (193 aa)) is disordered. Composition is skewed to low complexity over residues 209–220 (DDSSNQSDSNSN) and 251–267 (NGPQ…PQDP). Residues 342 to 386 (GGGGHSHDSGHDGIDPHLPTLLLGTSGSGGDDDDPHGPVQLSYYD) form a CTAR2 region. Basic and acidic residues predominate over residues 346-356 (HSHDSGHDGID). Low complexity predominate over residues 357–366 (PHLPTLLLGT).

This sequence belongs to the herpesviridae LMP-1 family. Interacts (via PXQXT motif) with host tumor necrosis factor receptor-associated factor (TRAF) proteins TRAF1, TRAF2, TRAF3 and TRAF5. Interacts with TRAF3; this interaction activates B lymphocytes. Interacts with human protein ZMYND11; leading to negatively regulate NF-kappa-B activation. Interacts with host UBE2I; this interaction induces the sumoylation of various cellular proteins. Interacts with host IRF7. Interacts with host TYK2. In terms of processing, ubiquitinated on the N-terminus.

It is found in the host cell membrane. Acts as a CD40 functional homolog to prevent apoptosis of infected B-lymphocytes and drive their proliferation. Functions as a constitutively active tumor necrosis factor receptor that induces the activation of several signaling pathways, including those of the NF-kappa-B family. LMP1 signaling leads to up-regulation of antiapoptotic proteins and provide growth signals in latently infected cells. Interacts with host UBE2I and subsequently affects the sumoylation state of several cellular proteins. For example, induces the sumoylation of host IRF7 thereby limiting its transcriptional activity and modulating the activation of innate immune responses. Also inhibits host IFN-alpha-stimulated STAT2 nuclear translocation and interferon-stimulated response element transcriptional activity by interacting with and inhibiting host TYK2. Induces SUMO expression during viral latency thereby dysregulating the host sumoylation processes. In Homo sapiens (Human), this protein is Latent membrane protein 1 (LMP1).